Consider the following 389-residue polypeptide: 5-amino-6-(D-ribitylamino)uracil--L-tyrosine 4-hydroxyphenyl transferase (389 aa).

Residues 56-298 (VSYVINRNIN…QAVARLFFGR (243 aa)) form the Radical SAM core domain. Positions 70, 74, and 77 each coordinate [4Fe-4S] cluster.

It belongs to the radical SAM superfamily. CofH family. As to quaternary structure, consists of two subunits, CofG and CofH. It depends on [4Fe-4S] cluster as a cofactor.

It catalyses the reaction 5-amino-6-(D-ribitylamino)uracil + L-tyrosine + S-adenosyl-L-methionine = 5-amino-5-(4-hydroxybenzyl)-6-(D-ribitylimino)-5,6-dihydrouracil + 2-iminoacetate + 5'-deoxyadenosine + L-methionine + H(+). It functions in the pathway cofactor biosynthesis; coenzyme F0 biosynthesis. Catalyzes the radical-mediated synthesis of 5-amino-5-(4-hydroxybenzyl)-6-(D-ribitylimino)-5,6-dihydrouracil from 5-amino-6-(D-ribitylamino)uracil and L-tyrosine. The polypeptide is 5-amino-6-(D-ribitylamino)uracil--L-tyrosine 4-hydroxyphenyl transferase (Gloeobacter violaceus (strain ATCC 29082 / PCC 7421)).